Reading from the N-terminus, the 399-residue chain is Argonaute-binding protein 1 (399 aa).

In terms of assembly, component of the argonaute siRNA chaperone (ARC) complex composed of ago1, arb1 and arb2. Interacts with ago1.

It is found in the nucleus. It localises to the cytoplasm. Component of the argonaute siRNA chaperone (ARC) complex which is required for histone H3K9 methylation, heterochromatin assembly and siRNA generation. The ARC complex contains mostly double-stranded siRNA. Inhibits the release of the siRNA passenger strand from ago1 together with arb2. Inhibits the slicer activity of ago1. Required for swi6 localization to the centromeric repeats. The chain is Argonaute-binding protein 1 (arb1) from Schizosaccharomyces pombe (strain 972 / ATCC 24843) (Fission yeast).